Here is a 62-residue protein sequence, read N- to C-terminus: Large ribosomal subunit protein uL15 (62 aa).

It belongs to the universal ribosomal protein uL15 family.

The polypeptide is Large ribosomal subunit protein uL15 (RPL28) (Candida albicans (Yeast)).